Here is a 249-residue protein sequence, read N- to C-terminus: Segregation and condensation protein A (249 aa).

It belongs to the ScpA family. In terms of assembly, component of a cohesin-like complex composed of ScpA, ScpB and the Smc homodimer, in which ScpA and ScpB bind to the head domain of Smc. The presence of the three proteins is required for the association of the complex with DNA.

It is found in the cytoplasm. Functionally, participates in chromosomal partition during cell division. May act via the formation of a condensin-like complex containing Smc and ScpB that pull DNA away from mid-cell into both cell halves. This Listeria monocytogenes serotype 4a (strain HCC23) protein is Segregation and condensation protein A.